Reading from the N-terminus, the 307-residue chain is Protein ORANGE, chloroplastic (307 aa).

Residues 1–55 constitute a chloroplast transit peptide; the sequence is MSSLGRILSVSYPPDPYTWRFSQYKLSSSLGRNRRLRWRFTALDPESSSLDSESS. Lysine 58 is covalently cross-linked (Glycyl lysine isopeptide (Lys-Gly) (interchain with G-Cter in ubiquitin)). 2 helical membrane-spanning segments follow: residues 146 to 166 and 199 to 219; these read VYYATCFSLIAGIILFGGLLA and IVASFSGGAVGVISALMVVEV. Positions 208 to 299 are CR-type-like; that stretch reads VGVISALMVV…CTGMAMASEH (92 aa). A CXXCXGXG motif repeat occupies 230–237; it reads CKYCLGTG. One copy of the CXXCXXXG motif repeat lies at 241-248; that stretch reads CARCSSTG. The stretch at 274–281 is one CXXCXGXG motif repeat; the sequence is CSNCSGAG. A CXXCXXXG motif repeat occupies 285–292; it reads CPTCLCTG.

This sequence belongs to the orange-like family. In terms of assembly, interacts with the phytoene synthase PSY1 in chloroplast. Binds to the eukaryotic release factor eRF1-2. Interacts with the transcription factor TCP14 in the nucleus to repress chloroplast biogenesis in etiolated seedlings. Associates to the E2 ubiquitin-conjugating enzyme UBC19. Post-translationally, ubiquitination at K-58 by UBC19 is essential for nuclear localization.

Its subcellular location is the plastid. The protein localises to the chloroplast membrane. It localises to the nucleus. It is found in the cytoplasm. Functionally, involved in chromoplast differentiation. Associated with a cellular process that triggers the differentiation of pro-plastids or other non-colored plastids into chromoplasts for carotenoid accumulation. Is associated with carotenoid accumulation in chromoplasts. Functions as a major regulator of the phytoene synthase PSY1 protein level and activity. Modulates carotenoid biosynthesis by means of post-transcriptional regulation of PSY1. Modulates carotenoid biosynthesis in part by up-regulating a series of endogenous carotenogenic genes. Regulates cell elongation in the petiole in an eRF1-2-dependent manner. Binds to and represses TCP14 transactivation activity, thus preventing early light-induced proteins (ELIPs, e.g. ELIP1 and ELIP2) expression and delaying chloroplast biogenesis (e.g. lower chlorophyll biosynthesis and slower development of thylakoid membranes) in germinating cotyledons and etiolated seedlings; reduced levels upon illumination combined to TCP14 accumulation derepress chloroplast biogenesis during deetiolation. The chain is Protein ORANGE, chloroplastic from Arabidopsis thaliana (Mouse-ear cress).